The chain runs to 288 residues: L-xylulose reductase (288 aa).

Positions 39, 113, and 147 each coordinate NADP(+). The Proton donor role is filled by Ser-181. NADP(+)-binding residues include Tyr-196, Lys-200, Ile-228, and Thr-230. The Proton acceptor role is filled by Tyr-196. The active-site Lowers pKa of active site Tyr is Lys-200.

This sequence belongs to the short-chain dehydrogenases/reductases (SDR) family.

It carries out the reaction xylitol + NADP(+) = L-xylulose + NADPH + H(+). It functions in the pathway carbohydrate degradation; L-arabinose degradation via L-arabinitol; D-xylulose 5-phosphate from L-arabinose (fungal route): step 3/5. L-xylulose reductase involved in the catabolism of L-arabinose through an oxidoreductive pathway. Catalyzes the NADPH-dependent reduction of L-xylulose. Is also able to convert D-xylulose, D-ribulose, L-sorbose, and D-fructose to their corresponding polyols. The protein is L-xylulose reductase of Hypocrea jecorina (strain QM6a) (Trichoderma reesei).